The primary structure comprises 383 residues: Queuine tRNA-ribosyltransferase (383 aa).

Aspartate 89 serves as the catalytic Proton acceptor. Substrate contacts are provided by residues aspartate 89–phenylalanine 93, aspartate 143, glutamine 187, and glycine 214. Residues glycine 245 to aspartate 251 are RNA binding. Catalysis depends on aspartate 264, which acts as the Nucleophile. The tract at residues threonine 269–arginine 273 is RNA binding; important for wobble base 34 recognition. The Zn(2+) site is built by cysteine 302, cysteine 304, cysteine 307, and histidine 333.

It belongs to the queuine tRNA-ribosyltransferase family. As to quaternary structure, homodimer. Within each dimer, one monomer is responsible for RNA recognition and catalysis, while the other monomer binds to the replacement base PreQ1. It depends on Zn(2+) as a cofactor.

It carries out the reaction 7-aminomethyl-7-carbaguanine + guanosine(34) in tRNA = 7-aminomethyl-7-carbaguanosine(34) in tRNA + guanine. It participates in tRNA modification; tRNA-queuosine biosynthesis. Functionally, catalyzes the base-exchange of a guanine (G) residue with the queuine precursor 7-aminomethyl-7-deazaguanine (PreQ1) at position 34 (anticodon wobble position) in tRNAs with GU(N) anticodons (tRNA-Asp, -Asn, -His and -Tyr). Catalysis occurs through a double-displacement mechanism. The nucleophile active site attacks the C1' of nucleotide 34 to detach the guanine base from the RNA, forming a covalent enzyme-RNA intermediate. The proton acceptor active site deprotonates the incoming PreQ1, allowing a nucleophilic attack on the C1' of the ribose to form the product. After dissociation, two additional enzymatic reactions on the tRNA convert PreQ1 to queuine (Q), resulting in the hypermodified nucleoside queuosine (7-(((4,5-cis-dihydroxy-2-cyclopenten-1-yl)amino)methyl)-7-deazaguanosine). The polypeptide is Queuine tRNA-ribosyltransferase (Thermodesulfovibrio yellowstonii (strain ATCC 51303 / DSM 11347 / YP87)).